Here is a 484-residue protein sequence, read N- to C-terminus: tRNA sulfurtransferase (484 aa).

Residues 63–167 form the THUMP domain; that stretch reads ANLILLLSST…NEKLFFIDKK (105 aa). Residues 185 to 186, K267, G289, and Q298 contribute to the ATP site; that span reads LI. A disulfide bridge links C346 with C458. Residues 406 to 484 form the Rhodanese domain; that stretch reads FAENEIVLDI…GFDNVKVYRP (79 aa). The active-site Cysteine persulfide intermediate is the C458.

This sequence belongs to the ThiI family.

The protein localises to the cytoplasm. It carries out the reaction [ThiI sulfur-carrier protein]-S-sulfanyl-L-cysteine + a uridine in tRNA + 2 reduced [2Fe-2S]-[ferredoxin] + ATP + H(+) = [ThiI sulfur-carrier protein]-L-cysteine + a 4-thiouridine in tRNA + 2 oxidized [2Fe-2S]-[ferredoxin] + AMP + diphosphate. It catalyses the reaction [ThiS sulfur-carrier protein]-C-terminal Gly-Gly-AMP + S-sulfanyl-L-cysteinyl-[cysteine desulfurase] + AH2 = [ThiS sulfur-carrier protein]-C-terminal-Gly-aminoethanethioate + L-cysteinyl-[cysteine desulfurase] + A + AMP + 2 H(+). It functions in the pathway cofactor biosynthesis; thiamine diphosphate biosynthesis. Catalyzes the ATP-dependent transfer of a sulfur to tRNA to produce 4-thiouridine in position 8 of tRNAs, which functions as a near-UV photosensor. Also catalyzes the transfer of sulfur to the sulfur carrier protein ThiS, forming ThiS-thiocarboxylate. This is a step in the synthesis of thiazole, in the thiamine biosynthesis pathway. The sulfur is donated as persulfide by IscS. In Psychromonas ingrahamii (strain DSM 17664 / CCUG 51855 / 37), this protein is tRNA sulfurtransferase.